Consider the following 286-residue polypeptide: Transcription factor bHLH11 (286 aa).

Residues 1 to 34 (MDQPMKPKTCSESDFADDSSASSSSSSGQNLRGA) are disordered. Residues 18–27 (DSSASSSSSS) are compositionally biased toward low complexity. In terms of domain architecture, bHLH spans 44–94 (AVCSQKAEREKLRRDKLKEQFLELGNALDPNRPKSDKASVLTDTIQMLKDV). Disordered regions lie at residues 182-202 (EQQA…MKQD) and 244-286 (QQDV…MLKP). 2 stretches are compositionally biased toward low complexity: residues 183–198 (QQAS…ADAS) and 255–269 (SLTT…YSLS). Over residues 270–279 (QAVQDSSPGT) the composition is skewed to polar residues.

In terms of assembly, homodimer. In terms of tissue distribution, expressed consitutively in roots, leaves, stems, and flowers.

It is found in the nucleus. This chain is Transcription factor bHLH11 (BHLH11), found in Arabidopsis thaliana (Mouse-ear cress).